The primary structure comprises 159 residues: Large ribosomal subunit protein mL50 (159 aa).

This sequence belongs to the mitochondrion-specific ribosomal protein mL50 family. As to quaternary structure, component of the mitochondrial ribosome large subunit (39S) which comprises a 16S rRNA and about 50 distinct proteins.

The protein localises to the mitochondrion. In Mus musculus (Mouse), this protein is Large ribosomal subunit protein mL50 (Mrpl50).